Consider the following 203-residue polypeptide: dTTP/UTP pyrophosphatase (203 aa).

Asp70 functions as the Proton acceptor in the catalytic mechanism.

It belongs to the Maf family. YhdE subfamily. A divalent metal cation serves as cofactor.

The protein resides in the cytoplasm. It catalyses the reaction dTTP + H2O = dTMP + diphosphate + H(+). The enzyme catalyses UTP + H2O = UMP + diphosphate + H(+). In terms of biological role, nucleoside triphosphate pyrophosphatase that hydrolyzes dTTP and UTP. May have a dual role in cell division arrest and in preventing the incorporation of modified nucleotides into cellular nucleic acids. The protein is dTTP/UTP pyrophosphatase (maf-1) of Pseudomonas putida (strain ATCC 47054 / DSM 6125 / CFBP 8728 / NCIMB 11950 / KT2440).